Reading from the N-terminus, the 205-residue chain is Thymidylate kinase (205 aa).

Residue 9–16 coordinates ATP; it reads GPEGSGKT.

The protein belongs to the thymidylate kinase family.

The catalysed reaction is dTMP + ATP = dTDP + ADP. Functionally, phosphorylation of dTMP to form dTDP in both de novo and salvage pathways of dTTP synthesis. The sequence is that of Thymidylate kinase from Staphylococcus aureus (strain MSSA476).